The sequence spans 432 residues: Trigger factor (432 aa).

A PPIase FKBP-type domain is found at 161 to 246; it reads GTRATINFVG…VVKVEARELP (86 aa).

Belongs to the FKBP-type PPIase family. Tig subfamily.

It localises to the cytoplasm. The catalysed reaction is [protein]-peptidylproline (omega=180) = [protein]-peptidylproline (omega=0). In terms of biological role, involved in protein export. Acts as a chaperone by maintaining the newly synthesized protein in an open conformation. Functions as a peptidyl-prolyl cis-trans isomerase. This chain is Trigger factor, found in Aliivibrio salmonicida (strain LFI1238) (Vibrio salmonicida (strain LFI1238)).